The chain runs to 102 residues: Small ribosomal subunit protein uS10 (102 aa).

Belongs to the universal ribosomal protein uS10 family. In terms of assembly, part of the 30S ribosomal subunit.

Its function is as follows. Involved in the binding of tRNA to the ribosomes. The protein is Small ribosomal subunit protein uS10 of Rhodopseudomonas palustris (strain HaA2).